Consider the following 533-residue polypeptide: Beta-1,4 N-acetylgalactosaminyltransferase 1 (533 aa).

Residues 1–7 (MRLDRRA) are Cytoplasmic-facing. A helical; Signal-anchor for type II membrane protein membrane pass occupies residues 8–25 (LYALVLLLACASLGLLYA). At 26–533 (STRDAPGLPN…KHRLQCMTAE (508 aa)) the chain is on the lumenal side. Residues N79 and N274 are each glycosylated (N-linked (GlcNAc...) asparagine). The cysteines at positions 429 and 476 are disulfide-linked.

The protein belongs to the glycosyltransferase 2 family. In terms of assembly, homodimer; disulfide-linked. As to expression, strongly expressed in brain, testis, spleen, and to a lesser extent in liver.

It is found in the golgi apparatus membrane. The catalysed reaction is a ganglioside GM3 (d18:1(4E)) + UDP-N-acetyl-alpha-D-galactosamine = a ganglioside GM2 (d18:1(4E)) + UDP + H(+). It catalyses the reaction a ganglioside GD3 (d18:1(4E)) + UDP-N-acetyl-alpha-D-galactosamine = a ganglioside GD2 (d18:1(4E)) + UDP + H(+). The enzyme catalyses a ganglioside GM3 + UDP-N-acetyl-alpha-D-galactosamine = a ganglioside GM2 + UDP + H(+). It carries out the reaction a ganglioside GD3 + UDP-N-acetyl-alpha-D-galactosamine = a ganglioside GD2 + UDP + H(+). The catalysed reaction is a ganglioside GD1a + UDP-N-acetyl-alpha-D-galactosamine = a ganglioside GalNAc-GD1a + UDP + H(+). It catalyses the reaction a ganglioside GT3 (d18:1(4E)) + UDP-N-acetyl-alpha-D-galactosamine = a ganglioside GT2 (d18:1(4E)) + UDP + H(+). The enzyme catalyses a beta-D-Gal-(1-&gt;4)-beta-D-Glc-(1&lt;-&gt;1)-Cer(d18:1(4E)) + UDP-N-acetyl-alpha-D-galactosamine = a ganglioside GA2 (d18:1(4E)) + UDP + H(+). It carries out the reaction a neolactoside IV(3)-alpha-NeuGc-nLc4Cer + UDP-N-acetyl-alpha-D-galactosamine = a neolactoside IV(4)-beta-GalNAc-IV(3)-alpha-NeuGc-nLc4Cer + UDP + H(+). It functions in the pathway sphingolipid metabolism. Involved in the biosynthesis of gangliosides GM2, GD2, GT2 and GA2 from GM3, GD3, GT3 and GA3, respectively. This is Beta-1,4 N-acetylgalactosaminyltransferase 1 from Rattus norvegicus (Rat).